The sequence spans 311 residues: Cytosolic Fe-S cluster assembly factor Nubp1 homolog (311 aa).

[4Fe-4S] cluster is bound by residues Cys9, Cys23, Cys26, and Cys32. 63–70 is a binding site for ATP; the sequence is GKGGVGKS. Cys240 and Cys243 together coordinate [4Fe-4S] cluster.

This sequence belongs to the Mrp/NBP35 ATP-binding proteins family. NUBP1/NBP35 subfamily. Heterotetramer of 2 Nubp1 and 2 Nubp2 chains. It depends on [4Fe-4S] cluster as a cofactor.

It localises to the cytoplasm. Its function is as follows. Component of the cytosolic iron-sulfur (Fe/S) protein assembly (CIA) machinery. Required for maturation of extramitochondrial Fe-S proteins. The Nubp1-Nubp2 heterotetramer forms a Fe-S scaffold complex, mediating the de novo assembly of an Fe-S cluster and its transfer to target apoproteins. This is Cytosolic Fe-S cluster assembly factor Nubp1 homolog from Drosophila yakuba (Fruit fly).